The sequence spans 175 residues: Putative lipoprotein LppN (175 aa).

Positions Met-1 to Ala-20 are cleaved as a signal peptide. A lipid anchor (N-palmitoyl cysteine) is attached at Cys-21. Cys-21 is lipidated: S-diacylglycerol cysteine. The interval Ala-31 to Gln-56 is disordered. A compositionally biased stretch (low complexity) spans Thr-33–Thr-48.

Its subcellular location is the cell membrane. In Mycobacterium bovis (strain ATCC BAA-935 / AF2122/97), this protein is Putative lipoprotein LppN (lppN).